We begin with the raw amino-acid sequence, 477 residues long: Glycogen synthase (477 aa).

Residue Lys15 coordinates ADP-alpha-D-glucose.

The protein belongs to the glycosyltransferase 1 family. Bacterial/plant glycogen synthase subfamily.

It carries out the reaction [(1-&gt;4)-alpha-D-glucosyl](n) + ADP-alpha-D-glucose = [(1-&gt;4)-alpha-D-glucosyl](n+1) + ADP + H(+). It participates in glycan biosynthesis; glycogen biosynthesis. Functionally, synthesizes alpha-1,4-glucan chains using ADP-glucose. In Klebsiella pneumoniae (strain 342), this protein is Glycogen synthase.